The sequence spans 135 residues: Fatty acid-binding protein 5 (135 aa).

The residue at position 2 (A2) is an N-acetylalanine. S3 carries the post-translational modification Phosphoserine. Positions 24 to 34 match the Nuclear localization signal motif; sequence KELGVGLALRK. N-eicosanoyl ethanolamine contacts are provided by C43 and R109. C120 and C127 are oxidised to a cystine. 129-131 is a (9Z,12Z)-octadecadienoate binding site; the sequence is RVY. Y131 serves as a coordination point for N-eicosanoyl ethanolamine. A hexadecanoate-binding site is contributed by Y131. Position 131 is a phosphotyrosine (Y131).

It belongs to the calycin superfamily. Fatty-acid binding protein (FABP) family. Monomer.

The protein localises to the cytoplasm. It localises to the nucleus. Its subcellular location is the synapse. It is found in the postsynaptic density. The protein resides in the secreted. It catalyses the reaction hexadecanoate(out) = hexadecanoate(in). It carries out the reaction (9Z,12Z)-octadecadienoate(out) = (9Z,12Z)-octadecadienoate(in). The enzyme catalyses (9Z)-octadecenoate(out) = (9Z)-octadecenoate(in). Intracellular carrier for long-chain fatty acids and related active lipids, such as endocannabinoids, that regulate the metabolism and actions of the ligands they bind. In addition to the cytosolic transport, selectively delivers specific fatty acids from the cytosol to the nucleus, wherein they activate nuclear receptors. Delivers retinoic acid to the nuclear receptor peroxisome proliferator-activated receptor delta; which promotes proliferation and survival. May also serve as a synaptic carrier of endocannabinoid at central synapses and thus controls retrograde endocannabinoid signaling. Modulates inflammation by regulating PTGES induction via NF-kappa-B activation, and prostaglandin E2 (PGE2) biosynthesis during inflammation. This chain is Fatty acid-binding protein 5, found in Rattus norvegicus (Rat).